We begin with the raw amino-acid sequence, 401 residues long: Multidrug resistance protein MdtH (401 aa).

A run of 11 helical transmembrane segments spans residues 13–33 (YFLL…FPLI), 34–54 (SIRF…ALGL), 99–116 (PWIL…GTLF), 139–159 (LLMM…SWLL), 165–185 (FVCW…VWLL), 214–234 (VLTL…LPIV), 243–263 (AAVK…LYPI), 277–297 (LMFG…ITHL), 299–319 (TLFM…PARE), 340–360 (LGLA…YDTG), and 368–388 (LPWF…YWQF).

This sequence belongs to the major facilitator superfamily. DHA1 family. MdtH (TC 2.A.1.2.21) subfamily.

The protein resides in the cell inner membrane. The polypeptide is Multidrug resistance protein MdtH (Yersinia enterocolitica serotype O:8 / biotype 1B (strain NCTC 13174 / 8081)).